Here is a 696-residue protein sequence, read N- to C-terminus: Elongation factor G (696 aa).

Positions 8 to 286 (EDVRNIGIAA…AVVHYLPSPV (279 aa)) constitute a tr-type G domain. GTP is bound by residues 17–24 (AHIDAGKT), 81–85 (DTPGH), and 135–138 (NKMD).

It belongs to the TRAFAC class translation factor GTPase superfamily. Classic translation factor GTPase family. EF-G/EF-2 subfamily.

The protein resides in the cytoplasm. Its function is as follows. Catalyzes the GTP-dependent ribosomal translocation step during translation elongation. During this step, the ribosome changes from the pre-translocational (PRE) to the post-translocational (POST) state as the newly formed A-site-bound peptidyl-tRNA and P-site-bound deacylated tRNA move to the P and E sites, respectively. Catalyzes the coordinated movement of the two tRNA molecules, the mRNA and conformational changes in the ribosome. The protein is Elongation factor G of Sulfurovum sp. (strain NBC37-1).